The following is a 196-amino-acid chain: Imidazole glycerol phosphate synthase subunit HisH (196 aa).

The 195-residue stretch at 2–196 folds into the Glutamine amidotransferase type-1 domain; the sequence is KATLINYGVG…LRNFYSWVKR (195 aa). The active-site Nucleophile is the Cys76. Catalysis depends on residues His175 and Glu177.

In terms of assembly, heterodimer of HisH and HisF.

The protein localises to the cytoplasm. The enzyme catalyses 5-[(5-phospho-1-deoxy-D-ribulos-1-ylimino)methylamino]-1-(5-phospho-beta-D-ribosyl)imidazole-4-carboxamide + L-glutamine = D-erythro-1-(imidazol-4-yl)glycerol 3-phosphate + 5-amino-1-(5-phospho-beta-D-ribosyl)imidazole-4-carboxamide + L-glutamate + H(+). The catalysed reaction is L-glutamine + H2O = L-glutamate + NH4(+). The protein operates within amino-acid biosynthesis; L-histidine biosynthesis; L-histidine from 5-phospho-alpha-D-ribose 1-diphosphate: step 5/9. Functionally, IGPS catalyzes the conversion of PRFAR and glutamine to IGP, AICAR and glutamate. The HisH subunit catalyzes the hydrolysis of glutamine to glutamate and ammonia as part of the synthesis of IGP and AICAR. The resulting ammonia molecule is channeled to the active site of HisF. This Sulfurisphaera tokodaii (strain DSM 16993 / JCM 10545 / NBRC 100140 / 7) (Sulfolobus tokodaii) protein is Imidazole glycerol phosphate synthase subunit HisH.